A 287-amino-acid polypeptide reads, in one-letter code: 2-dehydro-3-deoxyphosphooctonate aldolase (287 aa).

This sequence belongs to the KdsA family.

It localises to the cytoplasm. The catalysed reaction is D-arabinose 5-phosphate + phosphoenolpyruvate + H2O = 3-deoxy-alpha-D-manno-2-octulosonate-8-phosphate + phosphate. Its pathway is carbohydrate biosynthesis; 3-deoxy-D-manno-octulosonate biosynthesis; 3-deoxy-D-manno-octulosonate from D-ribulose 5-phosphate: step 2/3. The protein operates within bacterial outer membrane biogenesis; lipopolysaccharide biosynthesis. The chain is 2-dehydro-3-deoxyphosphooctonate aldolase from Leptospira interrogans serogroup Icterohaemorrhagiae serovar copenhageni (strain Fiocruz L1-130).